The chain runs to 476 residues: Probable cytosol aminopeptidase (476 aa).

Residues lysine 242 and aspartate 247 each contribute to the Mn(2+) site. Lysine 254 is an active-site residue. 3 residues coordinate Mn(2+): aspartate 265, aspartate 324, and glutamate 326. Arginine 328 is an active-site residue.

This sequence belongs to the peptidase M17 family. Mn(2+) is required as a cofactor.

It localises to the cytoplasm. The catalysed reaction is Release of an N-terminal amino acid, Xaa-|-Yaa-, in which Xaa is preferably Leu, but may be other amino acids including Pro although not Arg or Lys, and Yaa may be Pro. Amino acid amides and methyl esters are also readily hydrolyzed, but rates on arylamides are exceedingly low.. The enzyme catalyses Release of an N-terminal amino acid, preferentially leucine, but not glutamic or aspartic acids.. Functionally, presumably involved in the processing and regular turnover of intracellular proteins. Catalyzes the removal of unsubstituted N-terminal amino acids from various peptides. This chain is Probable cytosol aminopeptidase, found in Treponema denticola (strain ATCC 35405 / DSM 14222 / CIP 103919 / JCM 8153 / KCTC 15104).